A 310-amino-acid chain; its full sequence is 26S proteasome non-ATPase regulatory subunit 7 homolog B (310 aa).

N-acetylmethionine is present on M1. One can recognise an MPN domain in the interval 17-154; the sequence is VIVHPLVLLS…YYAVEEVKEN (138 aa).

It belongs to the peptidase M67A family. Component of the 19S regulatory particle (RP/PA700) lid subcomplex of the 26S proteasome. The 26S proteasome is composed of a core protease (CP), known as the 20S proteasome, capped at one or both ends by the 19S regulatory particle (RP/PA700). The RP/PA700 complex is composed of at least 17 different subunits in two subcomplexes, the base and the lid, which form the portions proximal and distal to the 20S proteolytic core, respectively.

In terms of biological role, acts as a regulatory subunit of the 26S proteasome which is involved in the ATP-dependent degradation of ubiquitinated proteins. This chain is 26S proteasome non-ATPase regulatory subunit 7 homolog B (RPN8B), found in Arabidopsis thaliana (Mouse-ear cress).